The primary structure comprises 427 residues: Peptidase B (427 aa).

K195 and D200 together coordinate Mn(2+). K207 is a catalytic residue. Positions 218, 277, and 279 each coordinate Mn(2+). The active site involves R281.

This sequence belongs to the peptidase M17 family. As to quaternary structure, homohexamer. The cofactor is Mn(2+).

The protein localises to the cytoplasm. It catalyses the reaction Release of an N-terminal amino acid, Xaa, from a peptide or arylamide. Xaa is preferably Glu or Asp but may be other amino acids, including Leu, Met, His, Cys and Gln.. Its function is as follows. Probably plays an important role in intracellular peptide degradation. The polypeptide is Peptidase B (Shigella flexneri serotype 5b (strain 8401)).